The chain runs to 131 residues: Peptidyl-prolyl cis-trans isomerase NIMA-interacting 4 (131 aa).

A necessary for nuclear localization and DNA-binding region spans residues 1–25 (MPPKGKSGSGKGGKGKAASGSESSE). The tract at residues 1-37 (MPPKGKSGSGKGGKGKAASGSESSEKKAQGPKGGGNA) is disordered. The segment at 1 to 41 (MPPKGKSGSGKGGKGKAASGSESSEKKAQGPKGGGNAVKVR) is necessary for association with the pre-rRNP complexes. Ser19 carries the phosphoserine; by CK2 modification. Residues 35 to 129 (GNAVKVRHIL…FGYHIIMVEG (95 aa)) enclose the PpiC domain.

It belongs to the PpiC/parvulin rotamase family. PIN4 subfamily. As to quaternary structure, found in pre-ribosomal ribonucleoprotein (pre-rRNP) complexes. In terms of processing, phosphorylated. Phosphorylation occurs both in the nucleus and the cytoplasm. Phosphorylation at Ser-19 does not affect its PPIase activity but is required for nuclear localization, and the dephosphorylation is a prerequisite for the binding to DNA. The unphosphorylated form associates with the pre-rRNP complexes in the nucleus.

The protein localises to the nucleus. Its subcellular location is the nucleolus. The protein resides in the cytoplasm. It is found in the cytoskeleton. It localises to the spindle. It carries out the reaction [protein]-peptidylproline (omega=180) = [protein]-peptidylproline (omega=0). Involved as a ribosomal RNA processing factor in ribosome biogenesis. Binds to tightly bent AT-rich stretches of double-stranded DNA. This is Peptidyl-prolyl cis-trans isomerase NIMA-interacting 4 (PIN4) from Bos taurus (Bovine).